We begin with the raw amino-acid sequence, 256 residues long: Acetyl-coenzyme A carboxylase carboxyl transferase subunit alpha (256 aa).

The region spanning 1 to 236 is the CoA carboxyltransferase C-terminal domain; it reads MTKITRIVRE…KQELLVELEQ (236 aa).

The protein belongs to the AccA family. Acetyl-CoA carboxylase is a heterohexamer composed of biotin carboxyl carrier protein (AccB), biotin carboxylase (AccC) and two subunits each of ACCase subunit alpha (AccA) and ACCase subunit beta (AccD).

The protein localises to the cytoplasm. The catalysed reaction is N(6)-carboxybiotinyl-L-lysyl-[protein] + acetyl-CoA = N(6)-biotinyl-L-lysyl-[protein] + malonyl-CoA. It participates in lipid metabolism; malonyl-CoA biosynthesis; malonyl-CoA from acetyl-CoA: step 1/1. Its function is as follows. Component of the acetyl coenzyme A carboxylase (ACC) complex. First, biotin carboxylase catalyzes the carboxylation of biotin on its carrier protein (BCCP) and then the CO(2) group is transferred by the carboxyltransferase to acetyl-CoA to form malonyl-CoA. This Streptococcus gordonii (strain Challis / ATCC 35105 / BCRC 15272 / CH1 / DL1 / V288) protein is Acetyl-coenzyme A carboxylase carboxyl transferase subunit alpha.